A 306-amino-acid polypeptide reads, in one-letter code: Ornithine carbamoyltransferase (306 aa).

Carbamoyl phosphate contacts are provided by residues 50-53 (STRT), Gln-77, Arg-101, and 128-131 (HPCQ). L-ornithine is bound by residues Asn-160, Asp-224, and 228–229 (SM). Carbamoyl phosphate is bound by residues 264–265 (CL) and Arg-292.

This sequence belongs to the aspartate/ornithine carbamoyltransferase superfamily. OTCase family.

It localises to the cytoplasm. The enzyme catalyses carbamoyl phosphate + L-ornithine = L-citrulline + phosphate + H(+). Its pathway is amino-acid biosynthesis; L-arginine biosynthesis; L-arginine from L-ornithine and carbamoyl phosphate: step 1/3. Its function is as follows. Reversibly catalyzes the transfer of the carbamoyl group from carbamoyl phosphate (CP) to the N(epsilon) atom of ornithine (ORN) to produce L-citrulline. The protein is Ornithine carbamoyltransferase of Mycobacterium leprae (strain TN).